Consider the following 372-residue polypeptide: NAD(P)H-quinone oxidoreductase subunit 1 (372 aa).

8 consecutive transmembrane segments (helical) span residues 27-47 (IIWL…GVLV), 97-117 (ILFT…WLIV), 128-148 (VGIG…GLLM), 176-196 (LALS…IDIV), 204-224 (ILSW…ICAL), 266-286 (ILSA…PIPV), 308-328 (SIGI…AILL), and 347-367 (FLLP…LAFP).

The protein belongs to the complex I subunit 1 family. In terms of assembly, NDH-1 is composed of at least 11 different subunits.

The protein resides in the cellular thylakoid membrane. It catalyses the reaction a plastoquinone + NADH + (n+1) H(+)(in) = a plastoquinol + NAD(+) + n H(+)(out). The catalysed reaction is a plastoquinone + NADPH + (n+1) H(+)(in) = a plastoquinol + NADP(+) + n H(+)(out). NDH-1 shuttles electrons from an unknown electron donor, via FMN and iron-sulfur (Fe-S) centers, to quinones in the respiratory and/or the photosynthetic chain. The immediate electron acceptor for the enzyme in this species is believed to be plastoquinone. Couples the redox reaction to proton translocation, and thus conserves the redox energy in a proton gradient. In Prochlorococcus marinus (strain MIT 9301), this protein is NAD(P)H-quinone oxidoreductase subunit 1.